A 1171-amino-acid chain; its full sequence is Kinesin-like protein GA13060 (1171 aa).

The segment at 1-24 is disordered; sequence MASSISRNGGFCGALQRAPPPMPP. Residues 40–400 form the Kinesin motor domain; sequence KVKVMLRVSD…IQIASRIHRL (361 aa). Disordered regions lie at residues 737–774, 798–820, 932–955, 1043–1099, and 1124–1143; these read LLGQDMSLPPDGDEDQDSGPSEVPPALPLFDDPLGSRD, LVASRASSSHHQHQHHRPSSQRS, PAYRLTPSPPKQPSHSPSQGSLPS, TSSE…QRHR, and RHSHGVGGHKKHRHRHEGNG. The span at 805–816 shows a compositional bias: basic residues; that stretch reads SSHHQHQHHRPS. A compositionally biased stretch (polar residues) spans 1043 to 1059; it reads TSSEAYDSGHDSNSTPR. Basic residues predominate over residues 1124-1139; it reads RHSHGVGGHKKHRHRH.

The protein belongs to the TRAFAC class myosin-kinesin ATPase superfamily. Kinesin family. KIF26 subfamily.

The protein resides in the cytoplasm. The protein localises to the cytoskeleton. In Drosophila pseudoobscura pseudoobscura (Fruit fly), this protein is Kinesin-like protein GA13060.